We begin with the raw amino-acid sequence, 228 residues long: Small ribosomal subunit protein uS3 (228 aa).

Residues V39–R107 enclose the KH type-2 domain.

This sequence belongs to the universal ribosomal protein uS3 family. As to quaternary structure, part of the 30S ribosomal subunit. Forms a tight complex with proteins S10 and S14.

Its function is as follows. Binds the lower part of the 30S subunit head. Binds mRNA in the 70S ribosome, positioning it for translation. This is Small ribosomal subunit protein uS3 from Ectopseudomonas mendocina (strain ymp) (Pseudomonas mendocina).